The primary structure comprises 322 residues: ATP-dependent 6-phosphofructokinase (322 aa).

Glycine 11 contacts ATP. An ADP-binding site is contributed by 21-25 (RAVTR). ATP-binding positions include 72-73 (RC) and 102-105 (GDGS). Residue aspartate 103 participates in Mg(2+) binding. Substrate is bound at residue 127–129 (TID). The active-site Proton acceptor is aspartate 129. Arginine 156 contributes to the ADP binding site. Substrate contacts are provided by residues arginine 164 and 171–173 (MGR). ADP-binding positions include 187 to 189 (GAE), arginine 213, and 215 to 217 (KKH). Substrate contacts are provided by residues glutamate 224, arginine 245, and 251–254 (HIQR).

The protein belongs to the phosphofructokinase type A (PFKA) family. ATP-dependent PFK group I subfamily. Prokaryotic clade 'B1' sub-subfamily. Homotetramer. Mg(2+) serves as cofactor.

Its subcellular location is the cytoplasm. It carries out the reaction beta-D-fructose 6-phosphate + ATP = beta-D-fructose 1,6-bisphosphate + ADP + H(+). It functions in the pathway carbohydrate degradation; glycolysis; D-glyceraldehyde 3-phosphate and glycerone phosphate from D-glucose: step 3/4. Its activity is regulated as follows. Allosterically activated by ADP and other diphosphonucleosides, and allosterically inhibited by phosphoenolpyruvate. In terms of biological role, catalyzes the phosphorylation of D-fructose 6-phosphate to fructose 1,6-bisphosphate by ATP, the first committing step of glycolysis. The sequence is that of ATP-dependent 6-phosphofructokinase from Staphylococcus epidermidis (strain ATCC 12228 / FDA PCI 1200).